Consider the following 239-residue polypeptide: 4-hydroxy-tetrahydrodipicolinate reductase (239 aa).

NAD(+) contacts are provided by residues Gly8–Met13, Gly78–Thr80, and Ser102–Met105. The active-site Proton donor/acceptor is His134. His135 contacts (S)-2,3,4,5-tetrahydrodipicolinate. The active-site Proton donor is Lys138. Gly144–Thr145 contributes to the (S)-2,3,4,5-tetrahydrodipicolinate binding site.

It belongs to the DapB family.

The protein localises to the cytoplasm. It carries out the reaction (S)-2,3,4,5-tetrahydrodipicolinate + NAD(+) + H2O = (2S,4S)-4-hydroxy-2,3,4,5-tetrahydrodipicolinate + NADH + H(+). The catalysed reaction is (S)-2,3,4,5-tetrahydrodipicolinate + NADP(+) + H2O = (2S,4S)-4-hydroxy-2,3,4,5-tetrahydrodipicolinate + NADPH + H(+). It participates in amino-acid biosynthesis; L-lysine biosynthesis via DAP pathway; (S)-tetrahydrodipicolinate from L-aspartate: step 4/4. Its function is as follows. Catalyzes the conversion of 4-hydroxy-tetrahydrodipicolinate (HTPA) to tetrahydrodipicolinate. The sequence is that of 4-hydroxy-tetrahydrodipicolinate reductase from Rickettsia peacockii (strain Rustic).